Here is a 731-residue protein sequence, read N- to C-terminus: Two pore channel protein 2 (731 aa).

The Cytoplasmic segment spans residues 1-68 (MAAEEQPLLG…RWYYSNVCQR (68 aa)). The chain crosses the membrane as a helical span at residues 69–89 (VLGFIIFLILILAFVEVPSSF). The Extracellular portion of the chain corresponds to 90–111 (TKTADVRYRSQPWQPPCGLTET). The helical transmembrane segment at 112 to 132 (IEAFCLLAFLVDLSVKGYLVG) threads the bilayer. The Cytoplasmic segment spans residues 133–139 (QAQLQQN). Residues 140-160 (LWLLAYFMVLVVSVVDWIVSL) traverse the membrane as a helical segment. At 161 to 167 (SLACEEP) the chain is on the extracellular side. Residues 168 to 188 (LRMRRLLRPFFLLQNSSMMKK) traverse the membrane as a helical segment. The interaction with phosphatidylinositol 3,5-bisphosphate stretch occupies residues 187 to 191 (KKTLK). Over 189 to 203 (TLKCIRWSLPEMASV) the chain is Cytoplasmic. A helical transmembrane segment spans residues 204–224 (GLLLAIHLCLFTIIGMLLFTI). Over 225-238 (GEKDEAQDQERLAY) the chain is Extracellular. An intramembrane region (helical; Pore-forming) is located at residues 239-263 (FRNLPEALTSLLVLLTTSNNPDVMI). Over 264–270 (PAYTQNR) the chain is Extracellular. Residues 271 to 291 (AFALFFIVFTLIGSLFLMNLL) traverse the membrane as a helical segment. The Cytoplasmic portion of the chain corresponds to 292–417 (TAIIYNQFRG…TAQFIFSHHY (126 aa)). A helical membrane pass occupies residues 418 to 438 (FDYLGNLVALGNLLSICVFLV). Residues 439–449 (LDSDLLPGERD) are Extracellular-facing. Residues 450 to 470 (DFVLGILDYIFILYYLLELLF) form a helical membrane-spanning segment. Residues 471 to 486 (KVFALGLPGYLSYHSN) are Cytoplasmic-facing. Residues 487 to 507 (VFDGLLTIILLVSEICTLAVY) traverse the membrane as a helical segment. Residues 508-524 (RLPHSGWKPEQYGPLSL) are Extracellular-facing. The helical transmembrane segment at 525 to 542 (WDMTRLMNTLIVFRFLRI) threads the bilayer. The Cytoplasmic segment spans residues 543–564 (IPNIKPMAEVANTILGLIPNLR). A helical transmembrane segment spans residues 565-585 (AFGGILVVAYYVFAMIGINLF). Residues 586–618 (RGVIVPPGNSSLVPDNNSAVCGSFEQLGYWPNN) are Extracellular-facing. Residues Asn-594 and Asn-601 are each glycosylated (N-linked (GlcNAc...) asparagine). An intramembrane region (helical; Pore-forming) is located at residues 619–641 (FDDFAAALITLWNVMVVNNWQVI). Residues 642–656 (LEAYKRYAGPWSMVY) are Extracellular-facing. The helical transmembrane segment at 657 to 677 (FVLWWLVSSVIWINLFLALLL) threads the bilayer. Residues 678–731 (ENFLHRWDPQGHKQLLVGTKQMSVELMFRDILEEPKEEELMEKLHKHPHLHLCR) lie on the Cytoplasmic side of the membrane.

It belongs to the calcium channel alpha-1 subunit (TC 1.A.1.11) family. Two pore calcium channel subfamily. In terms of assembly, homodimer. Interacts with LRRK2. Interacts with HAX1. Interacts with MTOR; the interaction is required for TPCN2 ATP sensitivity. Found in a complex with LSM12, TPCN1 and TPCN2. Interacts with LSM12. Post-translationally, N-glycosylated. Widely expressed. Highly expressed in macrophages. Expressed in pigmented cells.

It is found in the late endosome membrane. It localises to the lysosome membrane. Its subcellular location is the melanosome membrane. The catalysed reaction is Ca(2+)(in) = Ca(2+)(out). It carries out the reaction Na(+)(in) = Na(+)(out). Its activity is regulated as follows. Regulated by Mg(2+) ions, cytosolic Mg(2+) selectively inhibits outward current while lysosomal Mg(2+) modestly inhibits both the outward and inward currents. In the absence of Mg(2+), NAADP readily activates TPCN2, with properties similar to PI(3,5)P2. Na(+) current is inhibited by ATP in a MTORC-dependent manner. ATP sensitivity is independent of PI(3,5)P2. Both current elicited by PI(3,5)P2 as well as NAADP are inhibited by tetrandrine. Its function is as follows. Intracellular channel initially characterized as a non-selective Ca(2+)-permeable channel activated by NAADP (nicotinic acid adenine dinucleotide phosphate), it is also a highly-selective Na(+) channel activated directly by PI(3,5)P2 (phosphatidylinositol 3,5-bisphosphate). Localizes to the lysosomal and late endosome membranes where it regulates organellar membrane excitability, membrane trafficking, and pH homeostasis. Is associated with a plethora of physiological processes, including mTOR-dependent nutrient sensing, skin pigmentation and autophagy. Ion selectivity is not fixed but rather agonist-dependent and under defined ionic conditions, can be readily activated by both NAADP and PI(3,5)P2. As calcium channel, it increases the pH in the lysosomal lumen, as sodium channel, it promotes lysosomal exocytosis. Plays a crucial role in endolysosomal trafficking in the endolysosomal degradation pathway and is potentially involved in the homeostatic control of many macromolecules and cell metabolites. Also expressed in melanosomes of pigmented cells where mediates a Ca(2+) channel and/or PI(3,5)P2-activated melanosomal Na(+) channel to acidify pH and inhibit tyrosinase activity required for melanogenesis and pigmentation. Unlike the voltage-dependent TPCN1, TPCN2 is voltage independent and can be activated solely by PI(3,5)P2 binding. In contrast, PI(4,5)P2, PI(3,4)P2, PI(3)P and PI(5)P have no obvious effect on channel activation. In terms of biological role, (Microbial infection) During Ebola virus (EBOV) infection, controls the movement of endosomes containing virus particles and is required by EBOV to escape from the endosomal network into the cell cytoplasm. The polypeptide is Two pore channel protein 2 (Mus musculus (Mouse)).